The following is a 517-amino-acid chain: uncharacterized protein (517 aa).

10 helical membrane-spanning segments follow: residues 35 to 55 (FSLIVLSFIVSFFLIVAIPGI), 81 to 101 (IAIYTLAALAFSFCMSVGVFN), 102 to 122 (IGISGQMMAGANFGFMMILKV), 135 to 155 (IITILLMILGSVTVAMVVAAL), 164 to 184 (VVSAIMLNWVIVLVSAYLVGT), 223 to 243 (LVIAIAAAIFIAVLMKFTVFG), 268 to 288 (FLSFVISGILSGLLAAVVYTA), 302 to 322 (FGITSVPITGFDGIAIGLIAL), 328 to 348 (IVIVSTIISFVTIGAKPAGLN), and 352 to 372 (ASLVLGIMMYFAAIYNLMIYI).

It localises to the cell membrane. This is an uncharacterized protein from Mycoplasma pneumoniae (strain ATCC 29342 / M129 / Subtype 1) (Mycoplasmoides pneumoniae).